The chain runs to 243 residues: Adenosylcobinamide-GDP ribazoletransferase (243 aa).

5 helical membrane-spanning segments follow: residues 31–48, 61–81, 109–129, 134–154, and 188–208; these read LLFYPLVGLLFGVLLWVL, AALLLTAWVLLSGGLHLDGLA, IAVVTLVLVLLLKFTALVALI, GFALLLAPLIGRGALLGLFLC, and LLLGGYSGLWAVLLATVLFFW.

The protein belongs to the CobS family. Mg(2+) serves as cofactor.

The protein resides in the cell inner membrane. The enzyme catalyses alpha-ribazole + adenosylcob(III)inamide-GDP = adenosylcob(III)alamin + GMP + H(+). The catalysed reaction is alpha-ribazole 5'-phosphate + adenosylcob(III)inamide-GDP = adenosylcob(III)alamin 5'-phosphate + GMP + H(+). It functions in the pathway cofactor biosynthesis; adenosylcobalamin biosynthesis; adenosylcobalamin from cob(II)yrinate a,c-diamide: step 7/7. Joins adenosylcobinamide-GDP and alpha-ribazole to generate adenosylcobalamin (Ado-cobalamin). Also synthesizes adenosylcobalamin 5'-phosphate from adenosylcobinamide-GDP and alpha-ribazole 5'-phosphate. The chain is Adenosylcobinamide-GDP ribazoletransferase from Pseudomonas fluorescens (strain ATCC BAA-477 / NRRL B-23932 / Pf-5).